We begin with the raw amino-acid sequence, 275 residues long: uncharacterized protein (275 aa).

This is an uncharacterized protein from Methanocaldococcus jannaschii (strain ATCC 43067 / DSM 2661 / JAL-1 / JCM 10045 / NBRC 100440) (Methanococcus jannaschii).